The following is a 287-amino-acid chain: Cis-prenyltransferase 7, chloroplastic (287 aa).

Residues 1 to 34 (MLSLGFSLPPPSDNKLIITNNNQYNYRTNLANVC) constitute a chloroplast transit peptide. The active site involves Asp61.

Belongs to the UPP synthase family. Mg(2+) is required as a cofactor. Expressed in leaf trichomes and stem trichomes.

It is found in the plastid. It localises to the chloroplast. Its function is as follows. Uses geranylgeranyl diphosphate to catalyze the cis-prenyl chain elongation and produce polyprenyl diphosphate with a chain of 35 carbons. The chain is Cis-prenyltransferase 7, chloroplastic from Solanum lycopersicum (Tomato).